The sequence spans 110 residues: U1-lycotoxin-Ls1gg (110 aa).

The N-terminal stretch at 1–20 (MKFVLLFGVLLVTLFSYSSA) is a signal peptide. Positions 21-44 (EMLDDFDQADEDELLSLIEKEEAR) are excised as a propeptide. 3 cysteine pairs are disulfide-bonded: C54–C71, C61–C89, and C73–C87.

This sequence belongs to the neurotoxin 19 (CSTX) family. 03 subfamily. In terms of tissue distribution, expressed by the venom gland.

It is found in the secreted. The protein is U1-lycotoxin-Ls1gg of Lycosa singoriensis (Wolf spider).